We begin with the raw amino-acid sequence, 286 residues long: Ribosomal RNA small subunit methyltransferase H (286 aa).

S-adenosyl-L-methionine contacts are provided by residues 25–27, Asp45, Leu79, Asp93, and Gln100; that span reads GGH.

The protein belongs to the methyltransferase superfamily. RsmH family.

It is found in the cytoplasm. The enzyme catalyses cytidine(1402) in 16S rRNA + S-adenosyl-L-methionine = N(4)-methylcytidine(1402) in 16S rRNA + S-adenosyl-L-homocysteine + H(+). Its function is as follows. Specifically methylates the N4 position of cytidine in position 1402 (C1402) of 16S rRNA. This Petrotoga mobilis (strain DSM 10674 / SJ95) protein is Ribosomal RNA small subunit methyltransferase H.